We begin with the raw amino-acid sequence, 639 residues long: Chaperone protein DnaK (639 aa).

Thr-199 is modified (phosphothreonine; by autocatalysis). Residues 602-613 (AQAQQAAAGAEG) are compositionally biased toward low complexity. The tract at residues 602 to 639 (AQAQQAAAGAEGQPEDASAKQDDDVVDAEFEEVKDDKK) is disordered. A compositionally biased stretch (acidic residues) spans 625–639 (DVVDAEFEEVKDDKK).

It belongs to the heat shock protein 70 family.

Functionally, acts as a chaperone. The chain is Chaperone protein DnaK from Pseudoalteromonas atlantica (strain T6c / ATCC BAA-1087).